The primary structure comprises 168 residues: Photosystem I assembly protein Ycf3 (168 aa).

3 TPR repeats span residues 35-68 (AFAY…EMDP), 72-105 (SYIL…NPFL), and 120-153 (GEQA…TPGN).

It belongs to the Ycf3 family.

The protein resides in the plastid membrane. Essential for the assembly of the photosystem I (PSI) complex. May act as a chaperone-like factor to guide the assembly of the PSI subunits. The sequence is that of Photosystem I assembly protein Ycf3 from Cuscuta gronovii (Common dodder).